Here is a 115-residue protein sequence, read N- to C-terminus: Putative ethidium bromide resistance protein (115 aa).

4 helical membrane passes run 4-21 (WLFL…TSAL), 30-47 (LAPS…FYFL), 58-79 (VAYA…WLLH), and 85-104 (AWGF…ARSP).

The protein belongs to the drug/metabolite transporter (DMT) superfamily. Small multidrug resistance (SMR) (TC 2.A.7.1) family.

It localises to the cell membrane. Functionally, one of the determinants for resistance to ethidium bromide and quaternary ammonium compounds. The polypeptide is Putative ethidium bromide resistance protein (ebr) (Escherichia coli).